The primary structure comprises 391 residues: MKEAVIVSGARTPVGKAKKGSLATVRPDDLGAICVKETLKRAGGYEGNIDDLIIGCATPEAEQGLNMARNIGALAGLPYTVPAITVNRYCSSGLQSIAYAAEKIMLGAYDTAIAGGAESMSQVPMMGHVTRPNLALAEKAPEYYMSMGHTAEQVAKKYGVSREDQDAFAVRSHQNAAKALAEGKFKDEIVPVEVTVTEIGEDHKPMEKQFVFSQDEGVRPQTTADILSTLRPAFSVDGTVTAGNSSQTSDGAAAVMLMDREKADALGLAPLVKFRSFAVGGVPPEVMGIGPVEAIPRALKLAGLQLQDIGLFELNEAFASQAIQVIRELGIDEEKVNVNGGAIALGHPLGCTGTKLTLSLIHEMKRRNEQFGVVTMCIGGGMGAAGVFELC.

Residue cysteine 90 is the Acyl-thioester intermediate of the active site. Active-site proton acceptor residues include histidine 347 and cysteine 377.

This sequence belongs to the thiolase-like superfamily. Thiolase family.

The enzyme catalyses an acyl-CoA + acetyl-CoA = a 3-oxoacyl-CoA + CoA. Its pathway is lipid metabolism; fatty acid beta-oxidation. Its function is as follows. Involved in the degradation of long-chain fatty acids. This Bacillus subtilis (strain 168) protein is 3-ketoacyl-CoA thiolase (fadA).